The following is a 959-amino-acid chain: Isoleucine--tRNA ligase (959 aa).

The 'HIGH' region signature appears at 60–70; it reads PYANGSLHMGH. L-isoleucyl-5'-AMP is bound at residue Glu569. Positions 610-614 match the 'KMSKS' region motif; the sequence is KMSKS. Lys613 contributes to the ATP binding site. Zn(2+)-binding residues include Cys928, Cys931, Cys948, and Cys951.

Belongs to the class-I aminoacyl-tRNA synthetase family. IleS type 1 subfamily. In terms of assembly, monomer. Zn(2+) serves as cofactor.

It is found in the cytoplasm. The enzyme catalyses tRNA(Ile) + L-isoleucine + ATP = L-isoleucyl-tRNA(Ile) + AMP + diphosphate. Functionally, catalyzes the attachment of isoleucine to tRNA(Ile). As IleRS can inadvertently accommodate and process structurally similar amino acids such as valine, to avoid such errors it has two additional distinct tRNA(Ile)-dependent editing activities. One activity is designated as 'pretransfer' editing and involves the hydrolysis of activated Val-AMP. The other activity is designated 'posttransfer' editing and involves deacylation of mischarged Val-tRNA(Ile). In Crocosphaera subtropica (strain ATCC 51142 / BH68) (Cyanothece sp. (strain ATCC 51142)), this protein is Isoleucine--tRNA ligase.